The sequence spans 1176 residues: Serine/threonine-protein kinase pakF (1176 aa).

2 stretches are compositionally biased toward low complexity: residues 1–19 and 32–52; these read MSNL…ESSS and NLLN…SGSN. Disordered stretches follow at residues 1 to 231 and 254 to 361; these read MSNL…HESR and LPST…KKTK. The segment covering 64–76 has biased composition (pro residues); sequence QLPPNYTPPPPPH. Residues 92-133 are a coiled coil; that stretch reads LNNENSDNNNNNNNNNNNNNNNNNNNNNNNNNNNEQLARTES. Low complexity-rich tracts occupy residues 93-125, 133-148, and 156-172; these read NNEN…NNNN, SSVS…SNSG, and SSNI…ETYS. Polar residues predominate over residues 173-197; the sequence is MSPNQTLNSNIDSSEQQHQDLSSSV. Over residues 198–226 the composition is skewed to low complexity; it reads NNNNNNNNNNNNNNNNNNNNNNNNNNNNN. Positions 254–289 are enriched in polar residues; sequence LPSTPTQQNVEIQTTNGGSSETSPNGLISPRPSNDQ. Residues 316–353 show a composition bias toward low complexity; sequence SLSSSTTTPSTTSSLTSSPSSSSLAISSPNTTAATTTN. The region spanning 370–383 is the CRIB domain; it reads ISVPYNVIHKMHVD. Residues 394 to 646 enclose the Protein kinase domain; that stretch reads FILDEKLGDG…PIDLLCHPFL (253 aa). Residues 400-408 and Lys423 contribute to the ATP site; that span reads LGDGAYGSV. Asp514 serves as the catalytic Proton acceptor. Disordered regions lie at residues 670 to 723, 753 to 885, 968 to 1083, and 1112 to 1176; these read IDDL…SDEL, QEEE…GNNL, HTTS…TGRA, and NSNS…NIKK. Composition is skewed to low complexity over residues 682–693 and 710–720; these read SQSSSSSSPQSP and SIISPIPSSPS. Composition is skewed to acidic residues over residues 767-789 and 813-844; these read DEQD…EDVD and DQDD…DEEI. A coiled-coil region spans residues 812-873; sequence SDQDDEEEDE…NKKKNKKNNL (62 aa). The segment covering 852–870 has biased composition (basic residues); it reads VRKKKNKSTKKSNKKKNKK. Polar residues-rich tracts occupy residues 873 to 884 and 968 to 985; these read LSTIGKSGSGNN and HTTS…ATNL. 3 stretches are compositionally biased toward low complexity: residues 991–1044, 1051–1066, and 1148–1176; these read SSSP…RPNS, NNSS…SSSS, and SSGS…NIKK.

The protein belongs to the protein kinase superfamily. STE Ser/Thr protein kinase family. STE20 subfamily. The cofactor is Mg(2+).

It catalyses the reaction L-seryl-[protein] + ATP = O-phospho-L-seryl-[protein] + ADP + H(+). The enzyme catalyses L-threonyl-[protein] + ATP = O-phospho-L-threonyl-[protein] + ADP + H(+). The sequence is that of Serine/threonine-protein kinase pakF from Dictyostelium discoideum (Social amoeba).